The following is a 299-amino-acid chain: 4-diphosphocytidyl-2-C-methyl-D-erythritol kinase (299 aa).

The active site involves Lys19. Residue 110-120 (PVASGIGGGSA) participates in ATP binding. Asp152 is a catalytic residue.

The protein belongs to the GHMP kinase family. IspE subfamily.

The enzyme catalyses 4-CDP-2-C-methyl-D-erythritol + ATP = 4-CDP-2-C-methyl-D-erythritol 2-phosphate + ADP + H(+). It participates in isoprenoid biosynthesis; isopentenyl diphosphate biosynthesis via DXP pathway; isopentenyl diphosphate from 1-deoxy-D-xylulose 5-phosphate: step 3/6. Its function is as follows. Catalyzes the phosphorylation of the position 2 hydroxy group of 4-diphosphocytidyl-2C-methyl-D-erythritol. This chain is 4-diphosphocytidyl-2-C-methyl-D-erythritol kinase, found in Agrobacterium fabrum (strain C58 / ATCC 33970) (Agrobacterium tumefaciens (strain C58)).